We begin with the raw amino-acid sequence, 127 residues long: Fluoride-specific ion channel FluC (127 aa).

Transmembrane regions (helical) follow at residues L7 to I27, F37 to I57, L69 to V89, and L102 to I122. Positions 77 and 80 each coordinate Na(+).

This sequence belongs to the fluoride channel Fluc/FEX (TC 1.A.43) family.

It localises to the cell inner membrane. The enzyme catalyses fluoride(in) = fluoride(out). With respect to regulation, na(+) is not transported, but it plays an essential structural role and its presence is essential for fluoride channel function. Functionally, fluoride-specific ion channel. Important for reducing fluoride concentration in the cell, thus reducing its toxicity. The sequence is that of Fluoride-specific ion channel FluC from Mannheimia succiniciproducens (strain KCTC 0769BP / MBEL55E).